The sequence spans 86 residues: Small ribosomal subunit protein bS16 (86 aa).

This sequence belongs to the bacterial ribosomal protein bS16 family.

This is Small ribosomal subunit protein bS16 from Acidithiobacillus ferrooxidans (strain ATCC 23270 / DSM 14882 / CIP 104768 / NCIMB 8455) (Ferrobacillus ferrooxidans (strain ATCC 23270)).